The following is a 113-amino-acid chain: Putative single-stranded DNA-binding protein ycf41 (113 aa).

One can recognise an SSB domain in the interval 1–101 (MNYASFIIKI…EVSGFKIYPF (101 aa)).

The protein localises to the plastid. It localises to the chloroplast. In Trieres chinensis (Marine centric diatom), this protein is Putative single-stranded DNA-binding protein ycf41 (ycf41).